The primary structure comprises 376 residues: Chaperone protein DnaJ (376 aa).

The region spanning 5–70 is the J domain; sequence DYYEVLGVGR…DKKAAYDQFG (66 aa). The CR-type zinc finger occupies 132 to 210; that stretch reads GLTKELKVPT…CHGNGRVEKT (79 aa). Zn(2+)-binding residues include Cys145, Cys148, Cys162, Cys165, Cys184, Cys187, Cys198, and Cys201. CXXCXGXG motif repeat units lie at residues 145 to 152, 162 to 169, 184 to 191, and 198 to 205; these read CDSCDGSG, CGTCHGMG, CPTCHGRG, and CSKCHGNG.

It belongs to the DnaJ family. As to quaternary structure, homodimer. The cofactor is Zn(2+).

The protein localises to the cytoplasm. Functionally, participates actively in the response to hyperosmotic and heat shock by preventing the aggregation of stress-denatured proteins and by disaggregating proteins, also in an autonomous, DnaK-independent fashion. Unfolded proteins bind initially to DnaJ; upon interaction with the DnaJ-bound protein, DnaK hydrolyzes its bound ATP, resulting in the formation of a stable complex. GrpE releases ADP from DnaK; ATP binding to DnaK triggers the release of the substrate protein, thus completing the reaction cycle. Several rounds of ATP-dependent interactions between DnaJ, DnaK and GrpE are required for fully efficient folding. Also involved, together with DnaK and GrpE, in the DNA replication of plasmids through activation of initiation proteins. This is Chaperone protein DnaJ from Shewanella amazonensis (strain ATCC BAA-1098 / SB2B).